The chain runs to 70 residues: Small ribosomal subunit protein bS21 (70 aa).

The protein belongs to the bacterial ribosomal protein bS21 family.

This is Small ribosomal subunit protein bS21 from Albidiferax ferrireducens (strain ATCC BAA-621 / DSM 15236 / T118) (Rhodoferax ferrireducens).